The sequence spans 421 residues: Hemagglutinin-esterase (421 aa).

The signal sequence occupies residues 1 to 16 (MFLLPRFILVSCIIGS). The interval 7-127 (FILVSCIIGS…SNDIWMQNKG (121 aa)) is esterase domain 1. The Virion surface segment spans residues 17–392 (LGFDNPPTNV…PICVYDPLPL (376 aa)). S40 (nucleophile) is an active-site residue. An intrachain disulfide couples C44 to C65. N-linked (GlcNAc...) asparagine; by host glycosylation is found at N54, N89, N153, N236, and N301. 3 disulfide bridges follow: C113-C162, C197-C276, and C205-C249. A receptor binding region spans residues 128-266 (LFYTQVYKNM…GNYLAISNEL (139 aa)). The tract at residues 267 to 379 (LLTVPTKAIC…RCPTAADINT (113 aa)) is esterase domain 2. A disulfide bond links C307 and C312. The N-linked (GlcNAc...) asparagine; by host glycan is linked to N316. Catalysis depends on charge relay system residues D326 and H329. An intrachain disulfide couples C347 to C371. N358 carries an N-linked (GlcNAc...) asparagine; by host glycan. The chain crosses the membrane as a helical span at residues 393-413 (ILLGILLGVAVIIIVVLLLYF). At 414-421 (MVENGTRL) the chain is on the intravirion side. N-linked (GlcNAc...) asparagine; by host glycosylation is present at N417.

Belongs to the influenza type C/coronaviruses hemagglutinin-esterase family. Homodimer; disulfide-linked. Forms a complex with the M protein in the pre-Golgi. Associates then with S-M complex to form a ternary complex S-M-HE. Post-translationally, N-glycosylated in the host RER.

The protein resides in the virion membrane. It localises to the host cell membrane. The enzyme catalyses N-acetyl-9-O-acetylneuraminate + H2O = N-acetylneuraminate + acetate + H(+). It carries out the reaction N-acetyl-4-O-acetylneuraminate + H2O = N-acetylneuraminate + acetate + H(+). Its function is as follows. Structural protein that makes short spikes at the surface of the virus. Contains receptor binding and receptor-destroying activities. Mediates de-O-acetylation of N-acetyl-4-O-acetylneuraminic acid, which is probably the receptor determinant recognized by the virus on the surface of erythrocytes and susceptible cells. This receptor-destroying activity is important for virus release as it probably helps preventing self-aggregation and ensures the efficient spread of the progeny virus from cell to cell. May serve as a secondary viral attachment protein for initiating infection, the spike protein being the major one. May become a target for both the humoral and the cellular branches of the immune system. This chain is Hemagglutinin-esterase, found in Bos taurus (Bovine).